A 318-amino-acid chain; its full sequence is L-lactate dehydrogenase (318 aa).

Residues valine 18, aspartate 39, lysine 44, tyrosine 69, and 83–84 (GA) contribute to the NAD(+) site. Substrate contacts are provided by glutamine 86 and arginine 92. NAD(+)-binding positions include serine 105, 122–124 (VSN), and serine 147. 124 to 127 (NPVD) contacts substrate. 152-155 (DTSR) contacts substrate. Residue histidine 179 is the Proton acceptor of the active site. Tyrosine 225 bears the Phosphotyrosine mark. Threonine 234 contributes to the substrate binding site.

Belongs to the LDH/MDH superfamily. LDH family. Homotetramer.

Its subcellular location is the cytoplasm. The enzyme catalyses (S)-lactate + NAD(+) = pyruvate + NADH + H(+). It participates in fermentation; pyruvate fermentation to lactate; (S)-lactate from pyruvate: step 1/1. Its function is as follows. Catalyzes the conversion of lactate to pyruvate. This chain is L-lactate dehydrogenase, found in Clostridium botulinum (strain Langeland / NCTC 10281 / Type F).